The primary structure comprises 393 residues: Flap endonuclease 1 (393 aa).

Residues 1–108 (MGVLGLSKLL…SELESRRQRA (108 aa)) are N-domain. Residue Asp34 coordinates Mg(2+). DNA is bound at residue Arg74. Asp90 serves as a coordination point for Mg(2+). Residues 99–120 (SELESRRQRAEDAKHEFEKAKE) show a composition bias toward basic and acidic residues. A disordered region spans residues 99–127 (SELESRRQRAEDAKHEFEKAKEEGDDEAM). Positions 126–257 (AMEKMSKRMV…HKAWEGIKKY (132 aa)) are I-domain. Mg(2+) is bound by residues Glu162, Glu164, Asp183, and Asp185. DNA is bound at residue Glu162. DNA-binding residues include Gly235 and Asp237. A Mg(2+)-binding site is contributed by Asp237. Positions 340 to 348 (TQGRLDQFF) are interaction with PCNA. The segment at 358-393 (NSEASTAGTKRNRGAVALPGVLQRKSSSGHKKAVKK) is disordered. Over residues 384–393 (SSGHKKAVKK) the composition is skewed to basic residues.

The protein belongs to the XPG/RAD2 endonuclease family. FEN1 subfamily. In terms of assembly, interacts with PCNA. Three molecules of FEN1 bind to one PCNA trimer with each molecule binding to one PCNA monomer. PCNA stimulates the nuclease activity without altering cleavage specificity. Requires Mg(2+) as cofactor. Phosphorylated. Phosphorylation upon DNA damage induces relocalization to the nuclear plasma.

Its subcellular location is the nucleus. It localises to the nucleolus. The protein resides in the nucleoplasm. The protein localises to the mitochondrion. Functionally, structure-specific nuclease with 5'-flap endonuclease and 5'-3' exonuclease activities involved in DNA replication and repair. During DNA replication, cleaves the 5'-overhanging flap structure that is generated by displacement synthesis when DNA polymerase encounters the 5'-end of a downstream Okazaki fragment. It enters the flap from the 5'-end and then tracks to cleave the flap base, leaving a nick for ligation. Also involved in the long patch base excision repair (LP-BER) pathway, by cleaving within the apurinic/apyrimidinic (AP) site-terminated flap. Acts as a genome stabilization factor that prevents flaps from equilibrating into structures that lead to duplications and deletions. Also possesses 5'-3' exonuclease activity on nicked or gapped double-stranded DNA, and exhibits RNase H activity. Also involved in replication and repair of rDNA and in repairing mitochondrial DNA. The polypeptide is Flap endonuclease 1 (Trypanosoma brucei brucei (strain 927/4 GUTat10.1)).